The primary structure comprises 506 residues: Galactose/methyl galactoside import ATP-binding protein MglA (506 aa).

2 ABC transporter domains span residues 14–249 (LEMS…VGRS) and 264–506 (VILE…SLHL). ATP is bound at residue 46 to 53 (GENGAGKS).

Belongs to the ABC transporter superfamily. Galactose/methyl galactoside importer (TC 3.A.1.2.3) family. In terms of assembly, the complex is composed of one ATP-binding protein (MglA), two transmembrane proteins (MglC) and a solute-binding protein (MglB).

The protein localises to the cell inner membrane. The enzyme catalyses D-galactose(out) + ATP + H2O = D-galactose(in) + ADP + phosphate + H(+). It carries out the reaction methyl beta-D-galactoside(out) + ATP + H2O = methyl beta-D-galactoside(in) + ADP + phosphate + H(+). Functionally, part of the ABC transporter complex MglABC involved in galactose/methyl galactoside import. Responsible for energy coupling to the transport system. This Escherichia coli O6:K15:H31 (strain 536 / UPEC) protein is Galactose/methyl galactoside import ATP-binding protein MglA.